The primary structure comprises 243 residues: Phosphatidylserine decarboxylase proenzyme (243 aa).

The active-site Schiff-base intermediate with substrate; via pyruvic acid is Ser-212. Residue Ser-212 is modified to Pyruvic acid (Ser); by autocatalysis.

It belongs to the phosphatidylserine decarboxylase family. PSD-A subfamily. Heterodimer of a large membrane-associated beta subunit and a small pyruvoyl-containing alpha subunit. It depends on pyruvate as a cofactor. In terms of processing, is synthesized initially as an inactive proenzyme. Formation of the active enzyme involves a self-maturation process in which the active site pyruvoyl group is generated from an internal serine residue via an autocatalytic post-translational modification. Two non-identical subunits are generated from the proenzyme in this reaction, and the pyruvate is formed at the N-terminus of the alpha chain, which is derived from the carboxyl end of the proenzyme. The post-translation cleavage follows an unusual pathway, termed non-hydrolytic serinolysis, in which the side chain hydroxyl group of the serine supplies its oxygen atom to form the C-terminus of the beta chain, while the remainder of the serine residue undergoes an oxidative deamination to produce ammonia and the pyruvoyl prosthetic group on the alpha chain.

The protein resides in the cell membrane. The catalysed reaction is a 1,2-diacyl-sn-glycero-3-phospho-L-serine + H(+) = a 1,2-diacyl-sn-glycero-3-phosphoethanolamine + CO2. Its pathway is phospholipid metabolism; phosphatidylethanolamine biosynthesis; phosphatidylethanolamine from CDP-diacylglycerol: step 2/2. In terms of biological role, catalyzes the formation of phosphatidylethanolamine (PtdEtn) from phosphatidylserine (PtdSer). This is Phosphatidylserine decarboxylase proenzyme from Mycobacterium leprae (strain Br4923).